Reading from the N-terminus, the 493-residue chain is Argininosuccinate lyase (493 aa).

Belongs to the lyase 1 family. Argininosuccinate lyase subfamily.

The protein resides in the cytoplasm. It catalyses the reaction 2-(N(omega)-L-arginino)succinate = fumarate + L-arginine. It functions in the pathway amino-acid biosynthesis; L-arginine biosynthesis; L-arginine from L-ornithine and carbamoyl phosphate: step 3/3. The chain is Argininosuccinate lyase from Clavibacter sepedonicus (Clavibacter michiganensis subsp. sepedonicus).